The sequence spans 558 residues: Vanin-like protein 1 (558 aa).

A signal peptide spans 1–22 (MSNTWWWLSVVLLILGLMPGMS). The CN hydrolase domain occupies 33–299 (YTAGVVEFKQ…RAIYVAQVPK (267 aa)). Residue N65 is glycosylated (N-linked (GlcNAc...) asparagine). The Proton acceptor role is filled by E76. Residues N103, N120, and N128 are each glycosylated (N-linked (GlcNAc...) asparagine). Catalysis depends on K171, which acts as the Proton donor. An N-linked (GlcNAc...) asparagine glycan is attached at N180. Catalysis depends on C203, which acts as the Nucleophile. 2 N-linked (GlcNAc...) asparagine glycosylation sites follow: N354 and N379. The GPI-anchor amidated serine moiety is linked to residue S531. The propeptide at 532–558 (GSPGLRILGGWLAMPLIILAIARTMSS) is removed in mature form.

This sequence belongs to the carbon-nitrogen hydrolase superfamily. BTD/VNN family. In terms of tissue distribution, expressed in larvae and early pupae. Expressed in third instar larvae.

It is found in the cell membrane. The chain is Vanin-like protein 1 from Drosophila melanogaster (Fruit fly).